The sequence spans 196 residues: 3-isopropylmalate dehydratase small subunit (196 aa).

This sequence belongs to the LeuD family. LeuD type 1 subfamily. As to quaternary structure, heterodimer of LeuC and LeuD.

The enzyme catalyses (2R,3S)-3-isopropylmalate = (2S)-2-isopropylmalate. It functions in the pathway amino-acid biosynthesis; L-leucine biosynthesis; L-leucine from 3-methyl-2-oxobutanoate: step 2/4. Its function is as follows. Catalyzes the isomerization between 2-isopropylmalate and 3-isopropylmalate, via the formation of 2-isopropylmaleate. The protein is 3-isopropylmalate dehydratase small subunit of Streptococcus sanguinis (strain SK36).